A 121-amino-acid chain; its full sequence is N-alpha-acetyltransferase 38, NatC auxiliary subunit (121 aa).

The 74-residue stretch at 40-113 (PGRRKLQKWL…IVSLSIDEPD (74 aa)) folds into the Sm domain.

The protein belongs to the snRNP Sm proteins family. As to quaternary structure, component of the N-terminal acetyltransferase C (NatC) complex, which is composed of Naa35, Sbat/Naa38 and Naa30A. Interacts with Smn and Hez; along with Hez and Vlet, may form an accessory subcomplex involved in SMN complex function.

It localises to the cytoplasm. It is found in the nucleus. Its function is as follows. Auxiliary component of the N-terminal acetyltransferase C (NatC) complex which catalyzes acetylation of N-terminal methionine residues. May have an accessory function in the survival motor neuron (SMN) complex. The polypeptide is N-alpha-acetyltransferase 38, NatC auxiliary subunit (Drosophila melanogaster (Fruit fly)).